The chain runs to 358 residues: Plancitoxin-1 (358 aa).

An N-terminal signal peptide occupies residues 1–26 (MPSSVIMFTFLALTVLTAVMVGTSEA). The N-linked (GlcNAc...) asparagine glycan is linked to Asn274. His303 is an active-site residue.

Belongs to the DNase II family. As to quaternary structure, plancitoxin is a heterodimer of alpha and beta subunits; disulfide-linked by a single disulfide bond. In terms of tissue distribution, venom gland.

The protein resides in the secreted. It catalyses the reaction Endonucleolytic cleavage to nucleoside 3'-phosphates and 3'-phosphooligonucleotide end-products.. In terms of biological role, hydrolyzes DNA with an optimum pH of 7.2. Is potently hepatotoxic. It induces caspase-independent apoptosis (on rat liver cells) through the following procedure: binding to a specific receptor in the cytoplasmic membrane, entering the cell, entering the nucleus and degrading DNA. This chain is Plancitoxin-1, found in Acanthaster planci (Crown-of-thorns starfish).